The following is a 166-amino-acid chain: Endoribonuclease YbeY (166 aa).

Zn(2+)-binding residues include H125, H129, and H135.

Belongs to the endoribonuclease YbeY family. Zn(2+) serves as cofactor.

It localises to the cytoplasm. Single strand-specific metallo-endoribonuclease involved in late-stage 70S ribosome quality control and in maturation of the 3' terminus of the 16S rRNA. The protein is Endoribonuclease YbeY of Alkalilimnicola ehrlichii (strain ATCC BAA-1101 / DSM 17681 / MLHE-1).